An 89-amino-acid chain; its full sequence is UPF0367 protein PCC8801_1959 (89 aa).

This sequence belongs to the UPF0367 family.

This chain is UPF0367 protein PCC8801_1959, found in Rippkaea orientalis (strain PCC 8801 / RF-1) (Cyanothece sp. (strain PCC 8801)).